The sequence spans 193 residues: Ion-translocating oxidoreductase complex subunit A (193 aa).

The next 6 helical transmembrane spans lie at 5-25, 39-59, 65-85, 102-122, 134-154, and 171-191; these read ILLI…FLGL, IGMG…AYLV, IPLE…AVIV, LLGI…VALL, VLYG…FAAL, and SIAL…TGLV.

The protein belongs to the NqrDE/RnfAE family. As to quaternary structure, the complex is composed of six subunits: RnfA, RnfB, RnfC, RnfD, RnfE and RnfG.

It localises to the cell inner membrane. In terms of biological role, part of a membrane-bound complex that couples electron transfer with translocation of ions across the membrane. This Actinobacillus pleuropneumoniae serotype 5b (strain L20) protein is Ion-translocating oxidoreductase complex subunit A.